The chain runs to 749 residues: Cytosolic phospholipase A2 (749 aa).

Positions 1–178 are phospholipid binding; it reads MSFIDPYQHI…MKKLLGPKNS (178 aa). S2 carries the phosphoserine modification. Positions 6-122 constitute a C2 domain; the sequence is PYQHIIVEHQ…KVGEKKEVPF (117 aa). Ca(2+)-binding residues include D40, T41, D43, N65, D93, A94, and N95. The PLA2c domain maps to 140-740; that stretch reads SCPDLRFSMA…SNVEARRFFN (601 aa). Residue S228 is the Nucleophile of the active site. Position 268 is a phosphothreonine (T268). The interval 409-457 is disordered; that stretch reads GSQSRGSTMEEELENITTKHIVSNDSSDSDDESHEPKGTENEDAGSDYQ. 3 positions are modified to phosphoserine: S434, S435, and S437. Position 505 is a phosphoserine; by MAPK (S505). S515 is modified (phosphoserine). A Glycyl lysine isopeptide (Lys-Gly) (interchain with G-Cter in SUMO2) cross-link involves residue K541. D549 (proton acceptor) is an active-site residue. K606 is covalently cross-linked (Glycyl lysine isopeptide (Lys-Gly) (interchain with G-Cter in SUMO2)). Phosphoserine is present on residues S727 and S729.

In terms of assembly, interacts with KAT5. Post-translationally, phosphorylated at both Ser-505 and Ser-727 in response to mitogenic stimuli.

It is found in the cytoplasm. Its subcellular location is the golgi apparatus membrane. It localises to the nucleus envelope. The enzyme catalyses a 1,2-diacyl-sn-glycero-3-phosphocholine + H2O = a 1-acyl-sn-glycero-3-phosphocholine + a fatty acid + H(+). It catalyses the reaction a 1-O-alkyl-2-acyl-sn-glycero-3-phosphocholine + H2O = a 1-O-alkyl-sn-glycero-3-phosphocholine + a fatty acid + H(+). It carries out the reaction a 1-acyl-sn-glycero-3-phosphocholine + H2O = sn-glycerol 3-phosphocholine + a fatty acid + H(+). The catalysed reaction is 1-hexadecanoyl-2-(5Z,8Z,11Z,14Z-eicosatetraenoyl)-sn-glycero-3-phosphocholine + H2O = 1-hexadecanoyl-sn-glycero-3-phosphocholine + (5Z,8Z,11Z,14Z)-eicosatetraenoate + H(+). The enzyme catalyses 1,2-di-(5Z,8Z,11Z,14Z-eicosatetraenoyl)-sn-glycero-3-phosphocholine + H2O = 1-(5Z,8Z,11Z,14Z-eicosatetraenoyl)-sn-glycero-3-phosphocholine + (5Z,8Z,11Z,14Z)-eicosatetraenoate + H(+). It catalyses the reaction 1-octadecanoyl-2-(5Z,8Z,11Z,14Z-eicosatetraenoyl)-sn-glycero-3-phosphocholine + H2O = 1-octadecanoyl-sn-glycero-3-phosphocholine + (5Z,8Z,11Z,14Z)-eicosatetraenoate + H(+). It carries out the reaction 1-hexadecanoyl-2-(9Z,12Z-octadecadienoyl)-sn-glycero-3-phosphocholine + H2O = (9Z,12Z)-octadecadienoate + 1-hexadecanoyl-sn-glycero-3-phosphocholine + H(+). The catalysed reaction is 1-octadecanoyl-2-(9Z,12Z,15Z-octadecatrienoyl)-sn-glycero-3-phosphocholine + H2O = (9Z,12Z,15Z)-octadecatrienoate + 1-octadecanoyl-sn-glycero-3-phosphocholine + H(+). The enzyme catalyses 1-(5Z,8Z,11Z,14Z-eicosatetraenoyl)-2-hexadecanoyl-sn-glycero-3-phosphocholine + H2O = 1-(5Z,8Z,11Z,14Z-eicosatetraenoyl)-sn-glycero-3-phosphocholine + hexadecanoate + H(+). It catalyses the reaction 1-O-hexadecyl-2-(5Z,8Z,11Z,14Z)-eicosatetraenoyl-sn-glycero-3-phosphocholine + H2O = 1-O-hexadecyl-sn-glycero-3-phosphocholine + (5Z,8Z,11Z,14Z)-eicosatetraenoate + H(+). It carries out the reaction 1,2-di-(9Z-octadecenoyl)-sn-glycero-3-phospho-(1'-sn-glycerol) + H2O = 1-(9Z-octadecenoyl)-sn-glycero-3-phospho-(1'-sn-glycerol) + (9Z)-octadecenoate + H(+). The catalysed reaction is 1-octadecanoyl-2-(5Z,8Z,11Z,14Z-eicosatetraenoyl)-sn-glycero-3-phosphate + H2O = 1-octadecanoyl-sn-glycero-3-phosphate + (5Z,8Z,11Z,14Z)-eicosatetraenoate + H(+). The enzyme catalyses 1-hexadecanoyl-sn-glycero-3-phosphocholine + H2O = sn-glycerol 3-phosphocholine + hexadecanoate + H(+). It catalyses the reaction 2-(prostaglandin E2)-sn-glycero-3-phosphoethanolamine + H2O = sn-glycero-3-phosphoethanolamine + prostaglandin E2 + H(+). It carries out the reaction 2-[(15S)-hydroxy-(5Z,8Z,11Z,13E)-eicosatetraenoyl]-sn-glycero-3-phosphocholine + H2O = (15S)-hydroxy-(5Z,8Z,11Z,13E)-eicosatetraenoate + sn-glycerol 3-phosphocholine + H(+). The catalysed reaction is 2-[(15R)-hydroxy-(5Z,8Z,11Z,13E)-eicosatetraenoyl]-sn-glycero-3-phosphocholine + H2O = (15R)-hydroxy-(5Z,8Z,11Z,13E)-eicosatetraenoate + sn-glycerol 3-phosphocholine + H(+). The enzyme catalyses 2-(prostaglandin E2)-sn-glycero-3-phosphocholine + H2O = prostaglandin E2 + sn-glycerol 3-phosphocholine + H(+). It catalyses the reaction 2-[(11R)-hydroxy-(5Z,8Z,12E,14Z)-eicosatetraenoyl]-sn-glycero-3-phosphocholine + H2O = (11R)-hydroxy-(5Z,8Z,12E,14Z)-eicosatetraenoate + sn-glycerol 3-phosphocholine + H(+). It carries out the reaction 1-(5Z,8Z,11Z,14Z-eicosatetraenoyl)-2-O-hexadecyl-sn-glycero-3-phosphocholine + H2O = 2-O-hexadecyl-sn-glycero-3-phosphocholine + (5Z,8Z,11Z,14Z)-eicosatetraenoate + H(+). The catalysed reaction is 1-octadecanoyl-2-(5Z,8Z,11Z,14Z-eicosatetraenoyl)-sn-glycero-3-phosphocholine + glycerol = 1-(5Z,8Z,11Z,14Z-eicosatetraenoyl)-glycerol + 1-octadecanoyl-sn-glycero-3-phosphocholine. The enzyme catalyses 1-octadecanoyl-2-(9Z,12Z,15Z-octadecatrienoyl)-sn-glycero-3-phosphocholine + glycerol = 1-(9Z,12Z,15Z-octadecatrienoyl)-glycerol + 1-octadecanoyl-sn-glycero-3-phosphocholine. Its pathway is membrane lipid metabolism; glycerophospholipid metabolism. It functions in the pathway lipid metabolism; arachidonate metabolism. The protein operates within lipid metabolism; prostaglandin biosynthesis. It participates in lipid metabolism; leukotriene B4 biosynthesis. With respect to regulation, activated by cytosolic calcium, which is necessary for binding to membrane lipids. Activated by phosphorylation in response to mitogenic stimuli. Has primarily calcium-dependent phospholipase and lysophospholipase activities, with a major role in membrane lipid remodeling and biosynthesis of lipid mediators of the inflammatory response. Plays an important role in embryo implantation and parturition through its ability to trigger prostanoid production. Preferentially hydrolyzes the ester bond of the fatty acyl group attached at sn-2 position of phospholipids (phospholipase A2 activity). Selectively hydrolyzes sn-2 arachidonoyl group from membrane phospholipids, providing the precursor for eicosanoid biosynthesis via the cyclooxygenase pathway. In an alternative pathway of eicosanoid biosynthesis, hydrolyzes sn-2 fatty acyl chain of eicosanoid lysophopholipids to release free bioactive eicosanoids. Hydrolyzes the ester bond of the fatty acyl group attached at sn-1 position of phospholipids (phospholipase A1 activity) only if an ether linkage rather than an ester linkage is present at the sn-2 position. This hydrolysis is not stereospecific. Has calcium-independent phospholipase A2 and lysophospholipase activities in the presence of phosphoinositides. Has O-acyltransferase activity. Catalyzes the transfer of fatty acyl chains from phospholipids to a primary hydroxyl group of glycerol (sn-1 or sn-3), potentially contributing to monoacylglycerol synthesis. This chain is Cytosolic phospholipase A2 (PLA2G4A), found in Pongo abelii (Sumatran orangutan).